The following is a 327-amino-acid chain: o-succinylbenzoate synthase (327 aa).

The active-site Proton donor is K110. The Mg(2+) site is built by D138, E165, and D188. The active-site Proton acceptor is K212.

The protein belongs to the mandelate racemase/muconate lactonizing enzyme family. MenC type 1 subfamily. The cofactor is a divalent metal cation.

The catalysed reaction is (1R,6R)-6-hydroxy-2-succinyl-cyclohexa-2,4-diene-1-carboxylate = 2-succinylbenzoate + H2O. Its pathway is quinol/quinone metabolism; 1,4-dihydroxy-2-naphthoate biosynthesis; 1,4-dihydroxy-2-naphthoate from chorismate: step 4/7. It participates in quinol/quinone metabolism; menaquinone biosynthesis. Converts 2-succinyl-6-hydroxy-2,4-cyclohexadiene-1-carboxylate (SHCHC) to 2-succinylbenzoate (OSB). The polypeptide is o-succinylbenzoate synthase (Mycobacterium ulcerans (strain Agy99)).